We begin with the raw amino-acid sequence, 352 residues long: Pheromone-regulated membrane protein 6 (352 aa).

Over 1–36 the chain is Extracellular; the sequence is MESSLQKLKFQDIDINLIPTAKWTTKLQYILYTWCQ. The chain crosses the membrane as a helical span at residues 37-57; the sequence is SILHVAMFFSDIYTCIKLLAF. At 58-76 the chain is on the cytoplasmic side; it reads NTWSNNIIQPFLEFRISKW. A helical transmembrane segment spans residues 77–97; sequence LFSGCILCSSLILIWELVIGL. The Extracellular portion of the chain corresponds to 98-227; that stretch reads RVYRKKEITS…VILSFMLFSF (130 aa). Residues 228–248 form a helical membrane-spanning segment; sequence IIWVILISKLILSIIIFIIFI. The Cytoplasmic portion of the chain corresponds to 249–352; it reads RPRFLSSKRK…FPQKYKHKYI (104 aa).

The protein belongs to the KCH1 low affinity K(+) transporter family.

The protein localises to the cell membrane. The protein resides in the bud tip. Its subcellular location is the vacuole lumen. It catalyses the reaction K(+)(in) = K(+)(out). Its function is as follows. Low affinity potassium transporter that, with KCH1, participates in high-affinity Ca(2+) influx system (HACS) activation during the response to mating pheromone. Directly promotes K(+) influx and HACS may electrochemically respond to this K(+) influx. KCH1 and PRM6/KCH2 act at the apex of the calcium signaling pathway that is used for survival during prolonged exposures to mating pheromones. The sequence is that of Pheromone-regulated membrane protein 6 from Saccharomyces cerevisiae (strain ATCC 204508 / S288c) (Baker's yeast).